A 181-amino-acid chain; its full sequence is Oligoribonuclease (181 aa).

In terms of domain architecture, Exonuclease spans 8 to 171; it reads LIWIDLEMTG…DDIRESVAEL (164 aa). The active site involves Tyr129.

The protein belongs to the oligoribonuclease family.

The protein localises to the cytoplasm. 3'-to-5' exoribonuclease specific for small oligoribonucleotides. The sequence is that of Oligoribonuclease from Yersinia enterocolitica serotype O:8 / biotype 1B (strain NCTC 13174 / 8081).